The following is a 93-amino-acid chain: Putative regulatory protein Clos_1422 (93 aa).

It belongs to the RemA family.

The polypeptide is Putative regulatory protein Clos_1422 (Alkaliphilus oremlandii (strain OhILAs) (Clostridium oremlandii (strain OhILAs))).